The following is a 124-amino-acid chain: Large ribosomal subunit protein bL12 (124 aa).

The protein belongs to the bacterial ribosomal protein bL12 family. Homodimer. Part of the ribosomal stalk of the 50S ribosomal subunit. Forms a multimeric L10(L12)X complex, where L10 forms an elongated spine to which 2 to 4 L12 dimers bind in a sequential fashion. Binds GTP-bound translation factors.

Its function is as follows. Forms part of the ribosomal stalk which helps the ribosome interact with GTP-bound translation factors. Is thus essential for accurate translation. This Ralstonia nicotianae (strain ATCC BAA-1114 / GMI1000) (Ralstonia solanacearum) protein is Large ribosomal subunit protein bL12.